The following is a 376-amino-acid chain: Chaperone protein DnaJ (376 aa).

The J domain occupies 5-70; the sequence is DYYEVLGVKK…QKRAAYDQYG (66 aa). A CR-type zinc finger spans residues 131–209; that stretch reads GVTKEIRIPT…CHGHGRVEKS (79 aa). Residues C144, C147, C161, C164, C183, C186, C197, and C200 each coordinate Zn(2+). 4 CXXCXGXG motif repeats span residues 144–151, 161–168, 183–190, and 197–204; these read CDVCHGSG, CSTCRGAG, CPTCHGSG, and CNKCHGHG.

Belongs to the DnaJ family. In terms of assembly, homodimer. The cofactor is Zn(2+).

Its subcellular location is the cytoplasm. Functionally, participates actively in the response to hyperosmotic and heat shock by preventing the aggregation of stress-denatured proteins and by disaggregating proteins, also in an autonomous, DnaK-independent fashion. Unfolded proteins bind initially to DnaJ; upon interaction with the DnaJ-bound protein, DnaK hydrolyzes its bound ATP, resulting in the formation of a stable complex. GrpE releases ADP from DnaK; ATP binding to DnaK triggers the release of the substrate protein, thus completing the reaction cycle. Several rounds of ATP-dependent interactions between DnaJ, DnaK and GrpE are required for fully efficient folding. Also involved, together with DnaK and GrpE, in the DNA replication of plasmids through activation of initiation proteins. In Yersinia enterocolitica serotype O:8 / biotype 1B (strain NCTC 13174 / 8081), this protein is Chaperone protein DnaJ.